The primary structure comprises 146 residues: Acidic phospholipase A2 C (146 aa).

The first 21 residues, 1-21 (MNPAHLLILAAVCVSPLGASS), serve as a signal peptide directing secretion. Residues 22–27 (NRPMPL) constitute a propeptide that is removed on maturation. Cystine bridges form between Cys38/Cys98, Cys53/Cys145, Cys55/Cys71, Cys70/Cys126, Cys77/Cys119, Cys87/Cys112, and Cys105/Cys117. Ca(2+)-binding residues include Tyr54, Gly56, and Gly58. Residue His74 is part of the active site. Residue Asp75 participates in Ca(2+) binding. Asp120 is an active-site residue.

Belongs to the phospholipase A2 family. Group I subfamily. D49 sub-subfamily. Ca(2+) serves as cofactor. In terms of tissue distribution, expressed by the venom gland.

The protein resides in the secreted. It carries out the reaction a 1,2-diacyl-sn-glycero-3-phosphocholine + H2O = a 1-acyl-sn-glycero-3-phosphocholine + a fatty acid + H(+). Its function is as follows. PLA2 catalyzes the calcium-dependent hydrolysis of the 2-acyl groups in 3-sn-phosphoglycerides. This Naja sputatrix (Malayan spitting cobra) protein is Acidic phospholipase A2 C.